Reading from the N-terminus, the 363-residue chain is DNA replication and repair protein RecF (363 aa).

Position 31–38 (31–38) interacts with ATP; it reads GANSSGKT.

The protein belongs to the RecF family.

The protein localises to the cytoplasm. In terms of biological role, the RecF protein is involved in DNA metabolism; it is required for DNA replication and normal SOS inducibility. RecF binds preferentially to single-stranded, linear DNA. It also seems to bind ATP. This Nitrosococcus oceani (strain ATCC 19707 / BCRC 17464 / JCM 30415 / NCIMB 11848 / C-107) protein is DNA replication and repair protein RecF.